The following is an 821-amino-acid chain: Fibroblast growth factor receptor 2 (821 aa).

The N-terminal stretch at 1 to 21 is a signal peptide; it reads MVSWGRFICLVVVTMATLSLA. At 22 to 377 the chain is on the extracellular side; sequence RPSFSLVEDT…EITASPDYLE (356 aa). The region spanning 25-125 is the Ig-like C2-type 1 domain; it reads FSLVEDTTLE…ETWYFMVNVT (101 aa). Residues Cys62 and Cys107 are joined by a disulfide bond. N-linked (GlcNAc...) asparagine glycans are attached at residues Asn83 and Asn123. Residues 131–144 are compositionally biased toward acidic residues; that stretch reads GDDEDDTDGAEDFV. The disordered stretch occupies residues 131 to 151; it reads GDDEDDTDGAEDFVSENSNNK. 2 consecutive Ig-like C2-type domains span residues 154–247 and 256–358; these read PYWT…YHLD and PILQ…AWLT. A heparin-binding region spans residues 161 to 178; sequence KMEKRLHAVPAANTVKFR. Cys179 and Cys231 are oxidised to a cystine. 6 N-linked (GlcNAc...) asparagine glycosylation sites follow: Asn228, Asn241, Asn265, Asn297, Asn318, and Asn331. The cysteines at positions 278 and 342 are disulfide-linked. Residues 378 to 398 traverse the membrane as a helical segment; the sequence is IAIYCIGVFLIACMVVTVILC. Over 399–821 the chain is Cytoplasmic; it reads RMKNTTKKPD…YPHINGSVKT (423 aa). Tyr466 carries the phosphotyrosine; by autocatalysis modification. The region spanning 481-770 is the Protein kinase domain; the sequence is LTLGKPLGEG…LTLTTNEEYL (290 aa). ATP is bound by residues 487 to 495, Lys517, 565 to 567, and Asn571; these read LGEGCFGQV and EYA. A phosphotyrosine; by autocatalysis mark is found at Tyr586 and Tyr588. Catalysis depends on Asp626, which acts as the Proton acceptor. 3 positions are modified to phosphotyrosine; by autocatalysis: Tyr656, Tyr657, and Tyr769. Ser780 is subject to Phosphoserine.

This sequence belongs to the protein kinase superfamily. Tyr protein kinase family. Fibroblast growth factor receptor subfamily. In terms of assembly, monomer. Homodimer after ligand binding. Interacts predominantly with FGF1 and FGF2, but can also interact with FGF3, FGF4, FGF6, FGF7, FGF8, FGF9, FGF10, FGF17, FGF18 and FGF22 (in vitro). Ligand specificity is determined by tissue-specific expression of isoforms, and differences in the third Ig-like domain are crucial for ligand specificity. Isoform 1 has high affinity for FGF1 and FGF2, but low affinity for FGF7. Isoform 3 has high affinity for FGF1 and FGF7, and has much higher affinity for FGF7 than isoform 1 (in vitro). Affinity for fibroblast growth factors (FGFs) is increased by heparan sulfate glycosaminoglycans that function as coreceptors. Likewise, KLB increases the affinity for FGF19 and FGF21. Interacts with PLCG1, GRB2 and PAK4. Interacts with FLRT2. Autophosphorylated. Binding of FGF family members together with heparan sulfate proteoglycan or heparin promotes receptor dimerization and autophosphorylation on several tyrosine residues. Autophosphorylation occurs in trans between the two FGFR molecules present in the dimer. Phosphorylation at Tyr-769 is essential for interaction with PLCG1. In terms of processing, N-glycosylated in the endoplasmic reticulum. The N-glycan chains undergo further maturation to an Endo H-resistant form in the Golgi apparatus. Post-translationally, ubiquitinated. FGFR2 is rapidly ubiquitinated after autophosphorylation, leading to internalization and degradation. Subject to degradation both in lysosomes and by the proteasome.

It is found in the cell membrane. Its subcellular location is the golgi apparatus. It localises to the cytoplasmic vesicle. The protein localises to the secreted. The catalysed reaction is L-tyrosyl-[protein] + ATP = O-phospho-L-tyrosyl-[protein] + ADP + H(+). With respect to regulation, present in an inactive conformation in the absence of bound ligand. Ligand binding leads to dimerization and activation by autophosphorylation on tyrosine residues. Inhibited by ARQ 523 and ARQ 069; these compounds maintain the kinase in an inactive conformation and inhibit autophosphorylation. In terms of biological role, tyrosine-protein kinase that acts as a cell-surface receptor for fibroblast growth factors and plays an essential role in the regulation of cell proliferation, differentiation, migration and apoptosis, and in the regulation of embryonic development. Required for normal embryonic patterning, trophoblast function, limb bud development, lung morphogenesis, osteogenesis and skin development. Plays an essential role in the regulation of osteoblast differentiation, proliferation and apoptosis, and is required for normal skeleton development. Promotes cell proliferation in keratinocytes and immature osteoblasts, but promotes apoptosis in differentiated osteoblasts. Phosphorylates PLCG1, FRS2 and PAK4. Ligand binding leads to the activation of several signaling cascades. Activation of PLCG1 leads to the production of the cellular signaling molecules diacylglycerol and inositol 1,4,5-trisphosphate. Phosphorylation of FRS2 triggers recruitment of GRB2, GAB1, PIK3R1 and SOS1, and mediates activation of RAS, MAPK1/ERK2, MAPK3/ERK1 and the MAP kinase signaling pathway, as well as of the AKT1 signaling pathway. FGFR2 signaling is down-regulated by ubiquitination, internalization and degradation. Mutations that lead to constitutive kinase activation or impair normal FGFR2 maturation, internalization and degradation lead to aberrant signaling. Over-expressed FGFR2 promotes activation of STAT1. The polypeptide is Fibroblast growth factor receptor 2 (FGFR2) (Homo sapiens (Human)).